A 914-amino-acid polypeptide reads, in one-letter code: Inter-alpha-trypsin inhibitor heavy chain H1 (914 aa).

The signal sequence occupies residues 1 to 30 (MDGAAVGLRVLLGLGLVSLLTLEAMPAAWG). Residues 31 to 36 (LATTGR) constitute a propeptide that is removed on maturation. A VIT domain is found at 39 to 168 (AREKRQAVDT…KATFQLTYEE (130 aa)). Residue cysteine 62 is glycosylated (S-linked (Hex...) cysteine). Phosphoserine is present on serine 131. Asparagine 288 and asparagine 291 each carry an N-linked (GlcNAc...) asparagine glycan. The VWFA domain maps to 293–453 (SKNLVFVIDI…FNFLEVMSME (161 aa)). Phosphothreonine is present on residues threonine 405 and threonine 410. The N-linked (GlcNAc...) asparagine glycan is linked to asparagine 591. Threonine 656 carries O-linked (GalNAc...) threonine glycosylation. Aspartate 675 is modified (aspartate 1-(chondroitin 4-sulfate)-ester). The propeptide occupies 676–914 (PHFIIYVPQK…HTDYIVPDIF (239 aa)).

It belongs to the ITIH family. In terms of assembly, I-alpha-I plasma protease inhibitors are assembled from one or two heavy chains (HC) and one light chain, bikunin. Inter-alpha-inhibitor (I-alpha-I) is composed of ITIH1/HC1, ITIH2/HC2 and bikunin. Interacts with TNFAIP6 (via Link and CUB domains). Post-translationally, heavy chains are linked to bikunin via chondroitin 4-sulfate esterified to the alpha-carboxyl of the C-terminal aspartate after propeptide cleavage. In terms of processing, the S-linked glycan is composed of two 6-carbon sugars, possibly Glc or Gal.

The protein localises to the secreted. Its function is as follows. May act as a carrier of hyaluronan in serum or as a binding protein between hyaluronan and other matrix protein, including those on cell surfaces in tissues to regulate the localization, synthesis and degradation of hyaluronan which are essential to cells undergoing biological processes. The polypeptide is Inter-alpha-trypsin inhibitor heavy chain H1 (ITIH1) (Mesocricetus auratus (Golden hamster)).